The chain runs to 77 residues: Large ribosomal subunit protein uL24 (77 aa).

It belongs to the universal ribosomal protein uL24 family. Part of the 50S ribosomal subunit.

In terms of biological role, one of two assembly initiator proteins, it binds directly to the 5'-end of the 23S rRNA, where it nucleates assembly of the 50S subunit. One of the proteins that surrounds the polypeptide exit tunnel on the outside of the subunit. The sequence is that of Large ribosomal subunit protein uL24 from Campylobacter jejuni subsp. jejuni serotype O:6 (strain 81116 / NCTC 11828).